Reading from the N-terminus, the 163-residue chain is Nucleotide-binding protein CYB_0891 (163 aa).

Belongs to the YajQ family.

Functionally, nucleotide-binding protein. In Synechococcus sp. (strain JA-2-3B'a(2-13)) (Cyanobacteria bacterium Yellowstone B-Prime), this protein is Nucleotide-binding protein CYB_0891.